Here is a 517-residue protein sequence, read N- to C-terminus: 2-isopropylmalate synthase (517 aa).

The region spanning 6–267 (IIVFDTTLRD…YTTINTPEIY (262 aa)) is the Pyruvate carboxyltransferase domain. Residues D15, H201, H203, and N237 each contribute to the Mn(2+) site. The segment at 393-517 (DLIGLQISDC…RLSKSSEHQV (125 aa)) is regulatory domain.

Belongs to the alpha-IPM synthase/homocitrate synthase family. LeuA type 1 subfamily. Homodimer. Mn(2+) is required as a cofactor.

It localises to the cytoplasm. It catalyses the reaction 3-methyl-2-oxobutanoate + acetyl-CoA + H2O = (2S)-2-isopropylmalate + CoA + H(+). It functions in the pathway amino-acid biosynthesis; L-leucine biosynthesis; L-leucine from 3-methyl-2-oxobutanoate: step 1/4. Its function is as follows. Catalyzes the condensation of the acetyl group of acetyl-CoA with 3-methyl-2-oxobutanoate (2-ketoisovalerate) to form 3-carboxy-3-hydroxy-4-methylpentanoate (2-isopropylmalate). This chain is 2-isopropylmalate synthase, found in Aliarcobacter butzleri (strain RM4018) (Arcobacter butzleri).